The sequence spans 198 residues: NAD(P)H quinone oxidoreductase PST1 (198 aa).

A Flavodoxin-like domain is found at 6 to 192 (VAIIIYSLYH…AIAKQQGEDF (187 aa)). Residues 12–16 (SLYHH) and 112–164 (VFVW…SPWG) contribute to the FMN site.

This sequence belongs to the WrbA family. Requires FMN as cofactor.

It is found in the cell membrane. It catalyses the reaction a quinone + NADH + H(+) = a quinol + NAD(+). The enzyme catalyses a quinone + NADPH + H(+) = a quinol + NADP(+). Flavodoxin-like protein (FLP) that plays a role in cell wall integrity, oxidative stress protection and virulence. FLPs act as NAD(P)H quinone oxidoreductases. Reduces ubiquinone (coenzyme Q), enabling it to serve as an antioxidant in the membrane. This chain is NAD(P)H quinone oxidoreductase PST1, found in Candida albicans (strain SC5314 / ATCC MYA-2876) (Yeast).